A 468-amino-acid chain; its full sequence is 3-isopropylmalate dehydratase large subunit (468 aa).

The [4Fe-4S] cluster site is built by Cys347, Cys407, and Cys410.

This sequence belongs to the aconitase/IPM isomerase family. LeuC type 1 subfamily. Heterodimer of LeuC and LeuD. [4Fe-4S] cluster serves as cofactor.

The enzyme catalyses (2R,3S)-3-isopropylmalate = (2S)-2-isopropylmalate. It functions in the pathway amino-acid biosynthesis; L-leucine biosynthesis; L-leucine from 3-methyl-2-oxobutanoate: step 2/4. In terms of biological role, catalyzes the isomerization between 2-isopropylmalate and 3-isopropylmalate, via the formation of 2-isopropylmaleate. The protein is 3-isopropylmalate dehydratase large subunit of Campylobacter jejuni subsp. jejuni serotype O:23/36 (strain 81-176).